Consider the following 233-residue polypeptide: Urease accessory protein UreF (233 aa).

The protein belongs to the UreF family. As to quaternary structure, ureD, UreF and UreG form a complex that acts as a GTP-hydrolysis-dependent molecular chaperone, activating the urease apoprotein by helping to assemble the nickel containing metallocenter of UreC. The UreE protein probably delivers the nickel.

It is found in the cytoplasm. Functionally, required for maturation of urease via the functional incorporation of the urease nickel metallocenter. This is Urease accessory protein UreF from Polaromonas sp. (strain JS666 / ATCC BAA-500).